Reading from the N-terminus, the 429-residue chain is MTDKNTRTEKIQPFSAPKGVPDYAPPRSAAFVAVRDAFITQAHLAGFEHIELPIFEETGLFARGVGESTDVVSKEMYTFADRGERSVTLRPEGTAGVMRAVIEHSLDRGQLPVKLNYAGPFFRYERPQAGRYRQLQQVGVEAIGVDDPALDAEIIALADRSYRSLGLTGFRLELTSLGDSNCRPAYRQKLQDFLLNLPLDEETRRRAEINPLRVLDDKRAEVREMTADAPLMLDHLDDGCRTHFETVTGLLDDMGVPYEINPRMVRGLDYYTKTTFEFIHDGLGAQSGIGGGGRYDGLMAQLGGQDLSGIGYGLGVDRTILALEAEGVTVGQERRVDVYGVPLGQAAKKAMAGIINDLRAAGISADMSYGDRGLKGAMKGADRSGSLYTLVLGENELDNGTVAVKDMRAHDQQDIALSEVVSALRAKLA.

The protein belongs to the class-II aminoacyl-tRNA synthetase family. Homodimer.

The protein resides in the cytoplasm. The catalysed reaction is tRNA(His) + L-histidine + ATP = L-histidyl-tRNA(His) + AMP + diphosphate + H(+). In Corynebacterium efficiens (strain DSM 44549 / YS-314 / AJ 12310 / JCM 11189 / NBRC 100395), this protein is Histidine--tRNA ligase.